A 187-amino-acid polypeptide reads, in one-letter code: Flavin prenyltransferase LpdB (187 aa).

FMN contacts are provided by residues 10 to 12 (GAS), Ser-37, 88 to 91 (SMKT), and Arg-123. Residues Tyr-153 and Lys-169 each contribute to the dimethylallyl phosphate site.

This sequence belongs to the UbiX/PAD1 family.

It catalyses the reaction dimethylallyl phosphate + FMNH2 = prenylated FMNH2 + phosphate. In terms of biological role, involved in tannin degradation. Flavin prenyltransferase that catalyzes the synthesis of the prenylated FMN cofactor (prenyl-FMN) for gallate decarboxylase LpdC. The prenyltransferase is metal-independent and links a dimethylallyl moiety from dimethylallyl monophosphate (DMAP) to the flavin N5 and C6 atoms of FMN. This Lactiplantibacillus plantarum (strain ATCC BAA-793 / NCIMB 8826 / WCFS1) (Lactobacillus plantarum) protein is Flavin prenyltransferase LpdB.